Reading from the N-terminus, the 194-residue chain is Peptide deformylase (194 aa).

Positions 105 and 147 each coordinate Fe cation. Glu148 is a catalytic residue. His151 contributes to the Fe cation binding site.

The protein belongs to the polypeptide deformylase family. Fe(2+) serves as cofactor.

The catalysed reaction is N-terminal N-formyl-L-methionyl-[peptide] + H2O = N-terminal L-methionyl-[peptide] + formate. Removes the formyl group from the N-terminal Met of newly synthesized proteins. Requires at least a dipeptide for an efficient rate of reaction. N-terminal L-methionine is a prerequisite for activity but the enzyme has broad specificity at other positions. This Flavobacterium psychrophilum (strain ATCC 49511 / DSM 21280 / CIP 103535 / JIP02/86) protein is Peptide deformylase.